The following is a 1109-amino-acid chain: MGKFYYSNRRLACWAAGKNPHLGGSVEQWLAAINTDPSFRQTVKEDVQENREQPTAVRMFSWKVGSGPIDNPEKCDWHFVLTGERPAPSRPVKADEVVVVPQPKKVVIPTPPPPPAPYFRAVGAFAPTRSEFVRAIVERLTRLREESRAAALFAELPLEYPQGAPLKLSLAAKFAMLKHTTWRKWYDTSDERLLEAHPGGPCLPPPPPIQNPPSFQERVREFCRMKSCTKAFALETSLGLNKAWVGLVDIPSTSVCCADGKTTGGQTIAQEADPLQHRISTSVAPGRAQWISERRQALRRREQANSFEGLAAQTDMTFEQARNAYLGAADMIEQGLPLLPPLRSAYAPRGLWRGPSTRANYTLDFRLNGIPTGTNTLEILYNPVSEEEMEEYRDRGMSAVVIDALEIAINPFGMPGNPTDLTVVATYGHERDMTRAFIGSASTFLGNGLARAIFFPGLQYSQEEPRRESIIRLYVASTNATVDTDSVLAAISVGTLRQHVGSMHYRTVASTVHQAQVQGTTLRATMMGNTVVVSPEGSLVTGTPEARVEIGGGSSIRMVGPLQWESVEEPGQTFSIRSRSRSVRIDRNVDLPQLEAEPRLSSTVRGLAGRGVIYIPKDCQANRYLGTLNIRDMISDFKGVQYEKWITAGLVMPTFKIVIRLPANAFTGLTWVMSFDAYNRITSRITASADPVYTLSVPHWLIHHKLGTFSCEIDYGELCGHAMWFKSTTFESPRLHFTCLTGNNKELAADWQAVVELYAELEEATSFLGKPTLVFDPGVFNGKFQFLTCPPIFFDLTAVTALRSAGLTLGQVPMVGTTKVYNLNSTLVSCVLGMGGTVRGRVHICAPIFYSIVLWVVSEWNGTTMDWNELFKYPGVYVEEDGSFEVKIRSPYHRTPARLLAGQSQRDMSSLNFYAIAGPIAPSGETAQLPIVVQIDEIVRPDLSLPSFEDDYFVWVDFSEFTLDKEEIEIGSRFFDFTSNTCRVSMGENPFAAMIACHGLHSGVLDLKLQWSLNTEFGKSSGSVTITKLVGDKAMGLDGPSHVFAIQKLEGTTELLVGNFAGANPNTRFSLYSRWMAIKLDQAKSIKVLRVLCKPRPGFSFYGRTSFPV.

This sequence belongs to the nepoviruses RNA2 polyprotein family. Specific enzymatic cleavages in vivo by the P1 encoded 3C-like protease yield mature proteins.

The protein resides in the host cell junction. Its subcellular location is the host plasmodesma. The protein localises to the host cytoplasm. It localises to the host nucleus. It is found in the virion. Its function is as follows. Implicated in RNA2 replication. Could also be required for nematode transmission of the virus. In terms of biological role, transports viral genome to neighboring plant cells directly through plasmosdesmata, without any budding. The movement protein allows efficient cell to cell propagation, by bypassing the host cell wall barrier. Acts by forming a tubular structure at the host plasmodesmata, enlarging it enough to allow free passage of virion capsids. The sequence is that of RNA2 polyprotein from Vitis rupestris (Grape).